The primary structure comprises 427 residues: 3-phosphoshikimate 1-carboxyvinyltransferase (427 aa).

3 residues coordinate 3-phosphoshikimate: lysine 22, serine 23, and arginine 27. Phosphoenolpyruvate is bound at residue lysine 22. Residues glycine 97 and arginine 125 each contribute to the phosphoenolpyruvate site. 3-phosphoshikimate contacts are provided by serine 171, serine 172, glutamine 173, serine 199, aspartate 315, asparagine 338, and lysine 342. Glutamine 173 provides a ligand contact to phosphoenolpyruvate. Aspartate 315 (proton acceptor) is an active-site residue. Phosphoenolpyruvate-binding residues include arginine 346, arginine 388, and lysine 413.

The protein belongs to the EPSP synthase family. As to quaternary structure, monomer.

The protein resides in the cytoplasm. The enzyme catalyses 3-phosphoshikimate + phosphoenolpyruvate = 5-O-(1-carboxyvinyl)-3-phosphoshikimate + phosphate. It participates in metabolic intermediate biosynthesis; chorismate biosynthesis; chorismate from D-erythrose 4-phosphate and phosphoenolpyruvate: step 6/7. Functionally, catalyzes the transfer of the enolpyruvyl moiety of phosphoenolpyruvate (PEP) to the 5-hydroxyl of shikimate-3-phosphate (S3P) to produce enolpyruvyl shikimate-3-phosphate and inorganic phosphate. In Aliivibrio salmonicida (strain LFI1238) (Vibrio salmonicida (strain LFI1238)), this protein is 3-phosphoshikimate 1-carboxyvinyltransferase.